Here is a 217-residue protein sequence, read N- to C-terminus: MNKLITVAIDGPAGAGKSTIAKIIGEKFNLMYINTGSMYRAVTLKALENNISAEEVDKLLVMIDGMDMHFENDELILNGENINSLITMPNISKNVSAYASIREVRERLVNLMRKMALKYSVIMDGRDIGTVVLKDANFKFFLTASPEERADRRYKELMEKGIEVNYNEILQDIIKRDYLDSNREVDPLRKAEDAIEIDTTGIGIMGVVEKISSYMEK.

ATP is bound at residue Gly11 to Thr19.

Belongs to the cytidylate kinase family. Type 1 subfamily.

Its subcellular location is the cytoplasm. The enzyme catalyses CMP + ATP = CDP + ADP. It carries out the reaction dCMP + ATP = dCDP + ADP. This chain is Cytidylate kinase, found in Clostridium perfringens (strain SM101 / Type A).